Consider the following 841-residue polypeptide: Alpha-glucan phosphorylase 2, cytosolic (841 aa).

Residues 1-24 are disordered; that stretch reads MANANGKAATSLPEKISAKANPEA. Lysine 687 is subject to N6-(pyridoxal phosphate)lysine.

The protein belongs to the glycogen phosphorylase family. Requires pyridoxal 5'-phosphate as cofactor.

The protein resides in the cytoplasm. The catalysed reaction is [(1-&gt;4)-alpha-D-glucosyl](n) + phosphate = [(1-&gt;4)-alpha-D-glucosyl](n-1) + alpha-D-glucose 1-phosphate. Functionally, phosphorylase is an important allosteric enzyme in carbohydrate metabolism. Enzymes from different sources differ in their regulatory mechanisms and in their natural substrates. However, all known phosphorylases share catalytic and structural properties. The protein is Alpha-glucan phosphorylase 2, cytosolic (PHS2) of Arabidopsis thaliana (Mouse-ear cress).